A 200-amino-acid chain; its full sequence is Transcription elongation factor A protein-like 6 (200 aa).

The disordered stretch occupies residues 1–200 (MEKPYNKNEG…QRGLHDIPYL (200 aa)). Over residues 20 to 36 (DEVEPDDEGKSDEEEKP) the composition is skewed to acidic residues. Ser-30 carries the post-translational modification Phosphoserine. Basic and acidic residues-rich tracts occupy residues 37 to 52 (DAEG…KAEG), 60 to 80 (LEDK…KPQG), and 115 to 154 (DRGT…EELR). Phosphoserine is present on Ser-65.

It belongs to the TFS-II family. TFA subfamily.

It is found in the nucleus. May be involved in transcriptional regulation. The chain is Transcription elongation factor A protein-like 6 (TCEAL6) from Homo sapiens (Human).